The chain runs to 222 residues: Thiol:disulfide interchange protein DsbL (222 aa).

An N-terminal signal peptide occupies residues 1-27 (MSAKWINSIFKSVVLTAALALPFTASA). Residues 28 to 221 (FTEGTDYMVL…MAQLVRELAT (194 aa)) enclose the Thioredoxin domain. An intrachain disulfide couples C56 to C59.

It belongs to the thioredoxin family. DsbL subfamily. In terms of assembly, interacts with DsbI.

Its subcellular location is the periplasm. Its function is as follows. Involved in disulfide-bond formation. Acts by transferring its disulfide bond to other proteins. Part of a redox system composed of DsbI and DsbL that mediates formation of an essential disulfide bond in AssT. The sequence is that of Thiol:disulfide interchange protein DsbL from Lelliottia amnigena (Enterobacter amnigenus).